The primary structure comprises 169 residues: MNATALLDTISIEQISQFLYSEARFLDDEQWDDWLECYAPQASFWMPAWDDNDQLTENPQTEISLIYYPDRQGLEDRVFRIKTERSSATMPDTRTAHNISNIEVESRDGLQITVRFNWNTLSFRYKNSYSYFGMSRYVIDFSGEQPKILSKYVMLKNDYINQVIDIYHI.

The protein belongs to the bacterial ring-hydroxylating dioxygenase beta subunit family. In terms of assembly, this dioxygenase system consists of three proteins: the two subunits of the hydroxylase (BenA and BenB), and an electron transfer component (BenC).

It carries out the reaction benzoate + NADH + O2 + H(+) = (1R,6S)-1,6-dihydroxycyclohexa-2,4-diene-1-carboxylate + NAD(+). It participates in aromatic compound metabolism; benzoate degradation via hydroxylation; catechol from benzoate: step 1/2. Functionally, degradation of benzoate to 2-hydro-1,2-dihydroxybenzoate (DHB). The beta subunit may be responsible for the substrate specificity of the enzyme. The polypeptide is Benzoate 1,2-dioxygenase subunit beta (benB) (Acinetobacter baylyi (strain ATCC 33305 / BD413 / ADP1)).